An 89-amino-acid polypeptide reads, in one-letter code: MKQKHLQVFGTVQGVGFRYYTQRLANKYNILGTVQNVDDYVEIYAIGNDDDLEQFINAVTEGASPASHVTHYELEDTNVSEDFSDFKSI.

In terms of domain architecture, Acylphosphatase-like spans 3-89; the sequence is QKHLQVFGTV…SEDFSDFKSI (87 aa). Catalysis depends on residues Arg-18 and Asn-36.

This sequence belongs to the acylphosphatase family.

The enzyme catalyses an acyl phosphate + H2O = a carboxylate + phosphate + H(+). In Staphylococcus haemolyticus (strain JCSC1435), this protein is Acylphosphatase (acyP).